Consider the following 769-residue polypeptide: MATASNLGYPRIGAHRELKRAVEGYWKGDLTKDELRDSAQALRESHWATQQELGLDVVPSNDFSYYDQVLDACAMVGAVPERFPWDGTEVDLDTYFAMARGLQEKDLEGEESGVQAMEMTKWFDTNYHYIVPEFSHDTTFSLSSTKVIDEYEEAKAQGVDTRPVVIGPVSFLLLGKTQADDLDALDLLDDLLPVYAEVLQELADAGCEAVQLDEPNLVLDLSDAERAALDQAYEALADAADIELHVATYFGGLEDNLPTALDLPIDVLHLDLTRGEEQLDEALDHGVPDDLALSLGVIDGRNVWRADLDALLGTVETAIDALGTDRVLVGPSCSLLHVPVDLDTEPGLSDEMKTWFAFATQKIEEIVALAERADGHEDATEALFEKSRRAHAARAESDWINDAAVQDRVAGIDASMTERDSPHSSRSPLQREALDLPTLPTTTIGSFPQTDDMRRMRAQYKKDEISKDEYEDFIEEQIADTIAAQEEIGLDVLVHGEPERGDMVEHFGRQLDGFLFTENGWVQSYGTRCVRPPIIAGDVSRPEPMTTRWLSYANDQTDTPVKGMLTGPVTMLQWSFVRDDQSRAETCRQIALAIRDEVLDLEDVGIQAIQIDEPAFREGLPLREHQWDDYLDWAVECFRLASSGVRDETQIHTHMCYSEFNDIIEAIADMDADVISVEASRSKMELLDSFDAFDYPNEIGPGVYDIHSPRVPSVEEMEELIRTALDALEPSQMWVNPDCGLKTRRWVEVQPSLENMVQAAENVRERATA.

5-methyltetrahydropteroyltri-L-glutamate contacts are provided by residues 16–19 (RELK) and Lys121. The segment at 415–450 (SMTERDSPHSSRSPLQREALDLPTLPTTTIGSFPQT) is disordered. Positions 439-449 (LPTTTIGSFPQ) are enriched in polar residues. Residues 444-446 (IGS) and Glu497 contribute to the L-homocysteine site. Residues 444-446 (IGS) and Glu497 each bind L-methionine. Residues 528-529 (RC) and Trp574 contribute to the 5-methyltetrahydropteroyltri-L-glutamate site. Asp612 provides a ligand contact to L-homocysteine. Position 612 (Asp612) interacts with L-methionine. 5-methyltetrahydropteroyltri-L-glutamate is bound at residue Glu618. Zn(2+)-binding residues include His654, Cys656, and Glu678. His707 serves as the catalytic Proton donor. A Zn(2+)-binding site is contributed by Cys739.

It belongs to the vitamin-B12 independent methionine synthase family. Zn(2+) serves as cofactor.

It carries out the reaction 5-methyltetrahydropteroyltri-L-glutamate + L-homocysteine = tetrahydropteroyltri-L-glutamate + L-methionine. It functions in the pathway amino-acid biosynthesis; L-methionine biosynthesis via de novo pathway; L-methionine from L-homocysteine (MetE route): step 1/1. Functionally, catalyzes the transfer of a methyl group from 5-methyltetrahydrofolate to homocysteine resulting in methionine formation. This is 5-methyltetrahydropteroyltriglutamate--homocysteine methyltransferase from Salinibacter ruber (strain DSM 13855 / M31).